Consider the following 321-residue polypeptide: Phospholipid phosphatase-related protein type 5 (321 aa).

Helical transmembrane passes span 10-30 (SSMLYFQMVIMAGTVMLAYYF), 62-82 (AVPPVLLYSLAAGVPVLVIIV), 122-142 (FLGIYTFGLFATDIFVNAGQV), 196-213 (AALSVYAAMYLTMYITNT), 225-245 (VLCLGLMCLAFLTGLNRVAEY), and 252-272 (VIAGFLVGISIAVFLVVCVVN).

This sequence belongs to the PA-phosphatase related phosphoesterase family. Isoform 1 is expressed in brain, lung, kidney and colon. Isoform 2 is expressed in placenta, skeletal muscle and kidney.

It is found in the cell membrane. Its function is as follows. Induces filopodia formation and promotes neurite growth in a CDC42-independent manner; impedes neurite growth inhibitory-mediated axonal retraction. This chain is Phospholipid phosphatase-related protein type 5, found in Homo sapiens (Human).